The following is a 401-amino-acid chain: ATP phosphoribosyltransferase regulatory subunit (401 aa).

The tract at residues 373-401 is disordered; sequence PGQQGGAAAQGCDRRLQQDDGGGWVTRPL. Gly residues predominate over residues 392 to 401; the sequence is DGGGWVTRPL.

It belongs to the class-II aminoacyl-tRNA synthetase family. HisZ subfamily. Heteromultimer composed of HisG and HisZ subunits.

The protein localises to the cytoplasm. Its pathway is amino-acid biosynthesis; L-histidine biosynthesis; L-histidine from 5-phospho-alpha-D-ribose 1-diphosphate: step 1/9. Functionally, required for the first step of histidine biosynthesis. May allow the feedback regulation of ATP phosphoribosyltransferase activity by histidine. This is ATP phosphoribosyltransferase regulatory subunit from Alkalilimnicola ehrlichii (strain ATCC BAA-1101 / DSM 17681 / MLHE-1).